Consider the following 94-residue polypeptide: Aspartyl/glutamyl-tRNA(Asn/Gln) amidotransferase subunit C (94 aa).

The protein belongs to the GatC family. In terms of assembly, heterotrimer of A, B and C subunits.

The enzyme catalyses L-glutamyl-tRNA(Gln) + L-glutamine + ATP + H2O = L-glutaminyl-tRNA(Gln) + L-glutamate + ADP + phosphate + H(+). It catalyses the reaction L-aspartyl-tRNA(Asn) + L-glutamine + ATP + H2O = L-asparaginyl-tRNA(Asn) + L-glutamate + ADP + phosphate + 2 H(+). In terms of biological role, allows the formation of correctly charged Asn-tRNA(Asn) or Gln-tRNA(Gln) through the transamidation of misacylated Asp-tRNA(Asn) or Glu-tRNA(Gln) in organisms which lack either or both of asparaginyl-tRNA or glutaminyl-tRNA synthetases. The reaction takes place in the presence of glutamine and ATP through an activated phospho-Asp-tRNA(Asn) or phospho-Glu-tRNA(Gln). The sequence is that of Aspartyl/glutamyl-tRNA(Asn/Gln) amidotransferase subunit C from Desulfotalea psychrophila (strain LSv54 / DSM 12343).